Here is a 400-residue protein sequence, read N- to C-terminus: Keratin, type I cytoskeletal 19 (400 aa).

The head stretch occupies residues 1–79; it reads MTSYSYRQSS…TASDGLLAGN (79 aa). Arg-7 is subject to Omega-N-methylarginine. A phosphoserine mark is found at Ser-14 and Ser-22. Arg-24 bears the Asymmetric dimethylarginine; alternate mark. Arg-24 bears the Omega-N-methylarginine; alternate mark. The residue at position 32 (Arg-32) is an Omega-N-methylarginine. Residues Ser-35 and Ser-40 each carry the phosphoserine modification. An omega-N-methylarginine mark is found at Arg-43 and Arg-51. 2 positions are modified to phosphoserine: Ser-57 and Ser-72. Residues 80-115 form a coil 1A region; it reads EKLTMQNLNDRLASYLDKVRALEAANGELEVKIRDW. In terms of domain architecture, IF rod spans 80 to 391; sequence EKLTMQNLND…SLLEGQEDHY (312 aa). Positions 116 to 133 are linker 1; the sequence is YQKQGPGPSRDYSHYYTT. Residues 134–225 form a coil 1B region; sequence IQDLRDKILG…KNHEEEISTL (92 aa). The linker 12 stretch occupies residues 226-248; the sequence is RGQVGGQVSVEVDSAPGTDLAKI. Residues 244–390 form a necessary for interaction with PNN region; that stretch reads DLAKILSDMR…RSLLEGQEDH (147 aa). The coil 2 stretch occupies residues 249 to 387; the sequence is LSDMRSQYEV…ATYRSLLEGQ (139 aa). At Thr-323 the chain carries Phosphothreonine. Positions 388–400 are rod-like helical tail; that stretch reads EDHYNNLSASKVL. At Tyr-391 the chain carries Phosphotyrosine. A phosphoserine mark is found at Ser-395 and Ser-397.

Belongs to the intermediate filament family. As to quaternary structure, heterotetramer of two type I and two type II keratins. Interacts with PNN and the actin-binding domain of DMD. Interacts with HCV core protein. In terms of assembly, (Microbial infection) Interacts with hepatitis C virus/HCV core protein. In terms of tissue distribution, expressed in a defined zone of basal keratinocytes in the deep outer root sheath of hair follicles. Also observed in sweat gland and mammary gland ductal and secretory cells, bile ducts, gastrointestinal tract, bladder urothelium, oral epithelia, esophagus, ectocervical epithelium (at protein level). Expressed in epidermal basal cells, in nipple epidermis and a defined region of the hair follicle. Also seen in a subset of vascular wall cells in both the veins and artery of human umbilical cord, and in umbilical cord vascular smooth muscle. Observed in muscle fibers accumulating in the costameres of myoplasm at the sarcolemma in structures that contain dystrophin and spectrin.

Functionally, involved in the organization of myofibers. Together with KRT8, helps to link the contractile apparatus to dystrophin at the costameres of striated muscle. The sequence is that of Keratin, type I cytoskeletal 19 (KRT19) from Homo sapiens (Human).